The sequence spans 601 residues: Aspartate--tRNA ligase (601 aa).

Glu-183 contributes to the L-aspartate binding site. Residues 207–210 (QIFK) are aspartate. L-aspartate is bound at residue Arg-229. Residues 229-231 (RDE) and Gln-238 contribute to the ATP site. His-457 contacts L-aspartate. Residue Glu-497 participates in ATP binding. Arg-504 provides a ligand contact to L-aspartate. An ATP-binding site is contributed by 549-552 (GIDR).

It belongs to the class-II aminoacyl-tRNA synthetase family. Type 1 subfamily. As to quaternary structure, homodimer.

The protein localises to the cytoplasm. The catalysed reaction is tRNA(Asp) + L-aspartate + ATP = L-aspartyl-tRNA(Asp) + AMP + diphosphate. In terms of biological role, catalyzes the attachment of L-aspartate to tRNA(Asp) in a two-step reaction: L-aspartate is first activated by ATP to form Asp-AMP and then transferred to the acceptor end of tRNA(Asp). The sequence is that of Aspartate--tRNA ligase from Leptospira interrogans serogroup Icterohaemorrhagiae serovar copenhageni (strain Fiocruz L1-130).